Reading from the N-terminus, the 214-residue chain is MEKFVRHDGLVAPLDRANVDTDQIIPKQFLKSIKRTGFGPNLFDEWRYLDEGFPGQDNAARLVNNDFVLNQPDYQGASILLTRRNFGCGSSREHAPWALMDFGFKAIIAPSFADIFYNNCFKNGLLPIVLSEDNVEALFQVVSSKGGYRITIDLEGQQVIPESGEPLPFEIDEFRKHCLLNGLDEIGLTLNEADAIRAYERSRIEREPWVFADH.

This sequence belongs to the LeuD family. LeuD type 1 subfamily. In terms of assembly, heterodimer of LeuC and LeuD.

The catalysed reaction is (2R,3S)-3-isopropylmalate = (2S)-2-isopropylmalate. It functions in the pathway amino-acid biosynthesis; L-leucine biosynthesis; L-leucine from 3-methyl-2-oxobutanoate: step 2/4. Functionally, catalyzes the isomerization between 2-isopropylmalate and 3-isopropylmalate, via the formation of 2-isopropylmaleate. The protein is 3-isopropylmalate dehydratase small subunit of Alcanivorax borkumensis (strain ATCC 700651 / DSM 11573 / NCIMB 13689 / SK2).